The following is a 301-amino-acid chain: UDP-N-acetylenolpyruvoylglucosamine reductase 1 (301 aa).

The region spanning Lys29–Gly196 is the FAD-binding PCMH-type domain. Residue Arg174 is part of the active site. The Proton donor role is filled by Ser225. The active site involves Glu295.

This sequence belongs to the MurB family. It depends on FAD as a cofactor.

It localises to the cytoplasm. It catalyses the reaction UDP-N-acetyl-alpha-D-muramate + NADP(+) = UDP-N-acetyl-3-O-(1-carboxyvinyl)-alpha-D-glucosamine + NADPH + H(+). It functions in the pathway cell wall biogenesis; peptidoglycan biosynthesis. Functionally, cell wall formation. The protein is UDP-N-acetylenolpyruvoylglucosamine reductase 1 (murB1) of Bacillus anthracis.